Here is a 122-residue protein sequence, read N- to C-terminus: Large ribosomal subunit protein uL14 (122 aa).

It belongs to the universal ribosomal protein uL14 family. In terms of assembly, part of the 50S ribosomal subunit. Forms a cluster with proteins L3 and L19. In the 70S ribosome, L14 and L19 interact and together make contacts with the 16S rRNA in bridges B5 and B8.

In terms of biological role, binds to 23S rRNA. Forms part of two intersubunit bridges in the 70S ribosome. This is Large ribosomal subunit protein uL14 from Alteromonas mediterranea (strain DSM 17117 / CIP 110805 / LMG 28347 / Deep ecotype).